A 436-amino-acid polypeptide reads, in one-letter code: RNA-binding motif, single-stranded-interacting protein 3 (436 aa).

Positions 28–56 (APAPHPMAPPSPSTNSSSNNSSNNSSGEQ) are disordered. Pro residues predominate over residues 30 to 39 (APHPMAPPSP). Over residues 40–53 (STNSSSNNSSNNSS) the composition is skewed to low complexity. RRM domains are found at residues 60–133 (TNLY…MAKQ) and 139–224 (TNLY…FADG). Positions 398–421 (TSPQTVAPSSQDTSGQQQQIAVDT) are enriched in polar residues. A disordered region spans residues 398 to 436 (TSPQTVAPSSQDTSGQQQQIAVDTSNEHAPAYSYQQSKP).

The protein localises to the cytoplasm. Functionally, binds poly(A) and poly(U) oligoribonucleotides. The polypeptide is RNA-binding motif, single-stranded-interacting protein 3 (RBMS3) (Pongo abelii (Sumatran orangutan)).